Reading from the N-terminus, the 235-residue chain is Phosphoribosylaminoimidazole-succinocarboxamide synthase (235 aa).

This sequence belongs to the SAICAR synthetase family.

The enzyme catalyses 5-amino-1-(5-phospho-D-ribosyl)imidazole-4-carboxylate + L-aspartate + ATP = (2S)-2-[5-amino-1-(5-phospho-beta-D-ribosyl)imidazole-4-carboxamido]succinate + ADP + phosphate + 2 H(+). It functions in the pathway purine metabolism; IMP biosynthesis via de novo pathway; 5-amino-1-(5-phospho-D-ribosyl)imidazole-4-carboxamide from 5-amino-1-(5-phospho-D-ribosyl)imidazole-4-carboxylate: step 1/2. In Clostridium perfringens (strain 13 / Type A), this protein is Phosphoribosylaminoimidazole-succinocarboxamide synthase.